A 452-amino-acid polypeptide reads, in one-letter code: Pup--protein ligase (452 aa).

Glu-9 lines the Mg(2+) pocket. ATP is bound at residue Arg-53. A Mg(2+)-binding site is contributed by Tyr-55. The active-site Proton acceptor is Asp-57. Mg(2+) is bound at residue Glu-63. Positions 66 and 419 each coordinate ATP.

It belongs to the Pup ligase/Pup deamidase family. Pup-conjugating enzyme subfamily.

The catalysed reaction is ATP + [prokaryotic ubiquitin-like protein]-L-glutamate + [protein]-L-lysine = ADP + phosphate + N(6)-([prokaryotic ubiquitin-like protein]-gamma-L-glutamyl)-[protein]-L-lysine.. The protein operates within protein degradation; proteasomal Pup-dependent pathway. It functions in the pathway protein modification; protein pupylation. In terms of biological role, catalyzes the covalent attachment of the prokaryotic ubiquitin-like protein modifier Pup to the proteasomal substrate proteins, thereby targeting them for proteasomal degradation. This tagging system is termed pupylation. The ligation reaction involves the side-chain carboxylate of the C-terminal glutamate of Pup and the side-chain amino group of a substrate lysine. In Mycolicibacterium gilvum (strain PYR-GCK) (Mycobacterium gilvum (strain PYR-GCK)), this protein is Pup--protein ligase.